The sequence spans 249 residues: Dof zinc finger protein DOF4.5 (249 aa).

The segment at Arg25–Ala79 adopts a Dof-type zinc-finger fold. Zn(2+)-binding residues include Cys27, Cys30, Cys52, and Cys55.

The protein localises to the nucleus. Functionally, transcription factor that binds specifically to a 5'-AA[AG]G-3' consensus core sequence. The polypeptide is Dof zinc finger protein DOF4.5 (DOF4.5) (Arabidopsis thaliana (Mouse-ear cress)).